The chain runs to 364 residues: GDP-fucose transporter 1 (364 aa).

8 helical membrane passes run 34-56 (FLLR…ISMV), 76-98 (VTFY…AACC), 111-130 (LRVA…MITF), 140-162 (VAFY…YLLL), 167-185 (SFYA…WLGV), 195-214 (SWLG…LNAI), 227-249 (IWRL…LLLL), and 264-286 (AHFW…VTGL).

Belongs to the TPT transporter family. SLC35C subfamily.

It is found in the golgi apparatus membrane. The enzyme catalyses GMP(out) + GDP-beta-L-fucose(in) = GMP(in) + GDP-beta-L-fucose(out). In terms of biological role, antiporter specific for GDP-l-fucose and depending on the concomitant reverse transport of GMP. Involved in GDP-fucose import from the cytoplasm into the Golgi lumen. In Homo sapiens (Human), this protein is GDP-fucose transporter 1.